The chain runs to 494 residues: Probable malate:quinone oxidoreductase 3 (494 aa).

It belongs to the MQO family. FAD serves as cofactor.

The catalysed reaction is (S)-malate + a quinone = a quinol + oxaloacetate. It functions in the pathway carbohydrate metabolism; tricarboxylic acid cycle; oxaloacetate from (S)-malate (quinone route): step 1/1. The sequence is that of Probable malate:quinone oxidoreductase 3 from Staphylococcus epidermidis (strain ATCC 35984 / DSM 28319 / BCRC 17069 / CCUG 31568 / BM 3577 / RP62A).